A 118-amino-acid chain; its full sequence is Putative pterin-4-alpha-carbinolamine dehydratase (118 aa).

The protein belongs to the pterin-4-alpha-carbinolamine dehydratase family.

The catalysed reaction is (4aS,6R)-4a-hydroxy-L-erythro-5,6,7,8-tetrahydrobiopterin = (6R)-L-erythro-6,7-dihydrobiopterin + H2O. This is Putative pterin-4-alpha-carbinolamine dehydratase from Xanthomonas oryzae pv. oryzae (strain MAFF 311018).